Consider the following 223-residue polypeptide: Mediator of RNA polymerase II transcription subunit 8 (223 aa).

Positions 2 to 138 (SQSTASLVPE…VRETSGVTTA (137 aa)) are interaction with TBP1. Positions 33-59 (LDAVRMRLAQLTHSLRRIRDEMSKAEL) form a coiled coil.

The protein belongs to the Mediator complex subunit 8 family. Component of the Mediator complex, which is composed of at least 21 subunits that form three structurally distinct submodules. The Mediator head module contains MED6, MED8, MED11, SRB4/MED17, SRB5/MED18, ROX3/MED19, SRB2/MED20 and SRB6/MED22, the middle module contains MED1, MED4, NUT1/MED5, MED7, CSE2/MED9, NUT2/MED10, SRB7/MED21 and SOH1/MED31, and the tail module contains MED2, PGD1/MED3, RGR1/MED14, GAL11/MED15 and SIN4/MED16. The head and the middle modules interact directly with RNA polymerase II, whereas the elongated tail module interacts with gene-specific regulatory proteins. MED8 interacts directly with SRB5/MED18. Also interacts with Hexokinase B (HXK2). Interacts with TBP1.

It localises to the nucleus. Its function is as follows. Component of the Mediator complex, a coactivator involved in the regulated transcription of nearly all RNA polymerase II-dependent genes. Mediator functions as a bridge to convey information from gene-specific regulatory proteins to the basal RNA polymerase II transcription machinery. The Mediator complex, having a compact conformation in its free form, is recruited to promoters by direct interactions with regulatory proteins and serves for the assembly of a functional preinitiation complex with RNA polymerase II and the general transcription factors. The Mediator complex unfolds to an extended conformation and partially surrounds RNA polymerase II, specifically interacting with the unphosphorylated form of the C-terminal domain (CTD) of RNA polymerase II. The Mediator complex dissociates from the RNA polymerase II holoenzyme and stays at the promoter when transcriptional elongation begins. MED8 binds to the consensus sequence 5'-[AC][AG]GAAAT-3' in both the UAS of SUC2 and the DRS2 of HXK2. In Saccharomyces cerevisiae (strain ATCC 204508 / S288c) (Baker's yeast), this protein is Mediator of RNA polymerase II transcription subunit 8 (MED8).